A 308-amino-acid polypeptide reads, in one-letter code: Pseudouridine-5'-phosphate glycosidase (308 aa).

E25 (proton donor) is an active-site residue. Substrate contacts are provided by K86 and V106. A Mn(2+)-binding site is contributed by D142. 144–146 contacts substrate; that stretch reads SAD. The active-site Nucleophile is the K163.

The protein belongs to the pseudouridine-5'-phosphate glycosidase family. In terms of assembly, homotrimer. The cofactor is Mn(2+).

The catalysed reaction is D-ribose 5-phosphate + uracil = psi-UMP + H2O. Catalyzes the reversible cleavage of pseudouridine 5'-phosphate (PsiMP) to ribose 5-phosphate and uracil. Functions biologically in the cleavage direction, as part of a pseudouridine degradation pathway. This Symbiobacterium thermophilum (strain DSM 24528 / JCM 14929 / IAM 14863 / T) protein is Pseudouridine-5'-phosphate glycosidase.